Reading from the N-terminus, the 317-residue chain is Putative 2-hydroxyacid dehydrogenase SAR2389 (317 aa).

NAD(+) contacts are provided by residues 155-156, 234-236, and Asp-260; these read EI and ASR. Residue Arg-236 is part of the active site. Glu-265 is a catalytic residue. His-283 (proton donor) is an active-site residue. 283-286 lines the NAD(+) pocket; sequence HIGN.

This sequence belongs to the D-isomer specific 2-hydroxyacid dehydrogenase family.

This Staphylococcus aureus (strain MRSA252) protein is Putative 2-hydroxyacid dehydrogenase SAR2389.